The following is a 788-amino-acid chain: Protein FAR1-RELATED SEQUENCE 12 (788 aa).

In terms of domain architecture, FAR1 1 spans 57-133 (EFYNAYAART…QKEHNHELGG (77 aa)). Residues 127-200 (HNHELGGEGS…GEVSDDHHQT (74 aa)) form a disordered region. The span at 142 to 151 (PRPSRAPAPT) shows a compositional bias: low complexity. The span at 165–175 (KVVDESDRETR) shows a compositional bias: basic and acidic residues. Residues 225–301 (QFYQAYAEVV…NKDHNHDLEP (77 aa)) form the FAR1 2 domain. One can recognise an MULE domain in the interval 399 to 495 (SVVFDTSYRK…SAWQIREKER (97 aa)). The segment at 674-710 (HAVTFSASNLNSSCSCQMFEHEGLLCRHILKVFNLLD) adopts an SWIM-type zinc-finger fold.

This sequence belongs to the FHY3/FAR1 family. In terms of tissue distribution, expressed in hypocotyls, rosette and cauline leaves, inflorescences stems, flowers and siliques.

The protein resides in the nucleus. In terms of biological role, putative transcription activator involved in regulating light control of development. In Arabidopsis thaliana (Mouse-ear cress), this protein is Protein FAR1-RELATED SEQUENCE 12 (FRS12).